We begin with the raw amino-acid sequence, 181 residues long: KYPYIAGMGVYIFKKEILLNLLRWRFPTANDFGSEIIPAAAREINVKAYLFNDYWEDIGTIKSFFEANLALAEQPSKFSFYDASKPMYTSRRNLPPSMISGSKITDSIISHGCFLDKCRVEHSVVGIRSRIGSNVHLKDTVMLGADFYETDAERGDQLAEGKVPIGIGENTSIQNCIIDMN.

This sequence belongs to the bacterial/plant glucose-1-phosphate adenylyltransferase family. Heterotetramer. As to expression, leaves.

It localises to the plastid. The protein resides in the chloroplast. It is found in the amyloplast. The enzyme catalyses alpha-D-glucose 1-phosphate + ATP + H(+) = ADP-alpha-D-glucose + diphosphate. Its pathway is glycan biosynthesis; starch biosynthesis. With respect to regulation, highly active without 3'phosphoglycerate, and is only slightly affected by the activator 3'phosphoglycerate and inhibitor orthophosphate. Functionally, this protein plays a role in synthesis of starch. It catalyzes the synthesis of the activated glycosyl donor, ADP-glucose from Glc-1-P and ATP. The protein is Glucose-1-phosphate adenylyltransferase large subunit 2 of Hordeum vulgare (Barley).